A 601-amino-acid chain; its full sequence is Aspartate--tRNA(Asp/Asn) ligase (601 aa).

Glu-187 is a binding site for L-aspartate. The interval 211-214 (QQFK) is aspartate. The L-aspartate site is built by Arg-233 and His-461. 233-235 (RDE) contributes to the ATP binding site. Glu-495 contacts ATP. Arg-502 is a binding site for L-aspartate. 547–550 (GLDR) is a binding site for ATP.

The protein belongs to the class-II aminoacyl-tRNA synthetase family. Type 1 subfamily. In terms of assembly, homodimer.

It is found in the cytoplasm. The enzyme catalyses tRNA(Asx) + L-aspartate + ATP = L-aspartyl-tRNA(Asx) + AMP + diphosphate. Its function is as follows. Aspartyl-tRNA synthetase with relaxed tRNA specificity since it is able to aspartylate not only its cognate tRNA(Asp) but also tRNA(Asn). Reaction proceeds in two steps: L-aspartate is first activated by ATP to form Asp-AMP and then transferred to the acceptor end of tRNA(Asp/Asn). The chain is Aspartate--tRNA(Asp/Asn) ligase from Pelodictyon phaeoclathratiforme (strain DSM 5477 / BU-1).